Reading from the N-terminus, the 346-residue chain is Biotin synthase (346 aa).

Residues Lys38 to Thr256 form the Radical SAM core domain. The [4Fe-4S] cluster site is built by Cys53, Cys57, and Cys60. Positions 97, 128, 188, and 260 each coordinate [2Fe-2S] cluster.

It belongs to the radical SAM superfamily. Biotin synthase family. In terms of assembly, homodimer. It depends on [4Fe-4S] cluster as a cofactor. [2Fe-2S] cluster is required as a cofactor.

The catalysed reaction is (4R,5S)-dethiobiotin + (sulfur carrier)-SH + 2 reduced [2Fe-2S]-[ferredoxin] + 2 S-adenosyl-L-methionine = (sulfur carrier)-H + biotin + 2 5'-deoxyadenosine + 2 L-methionine + 2 oxidized [2Fe-2S]-[ferredoxin]. It participates in cofactor biosynthesis; biotin biosynthesis; biotin from 7,8-diaminononanoate: step 2/2. Functionally, catalyzes the conversion of dethiobiotin (DTB) to biotin by the insertion of a sulfur atom into dethiobiotin via a radical-based mechanism. This Salmonella arizonae (strain ATCC BAA-731 / CDC346-86 / RSK2980) protein is Biotin synthase.